The chain runs to 212 residues: Large ribosomal subunit protein uL3 (212 aa).

Gln154 carries the N5-methylglutamine modification.

The protein belongs to the universal ribosomal protein uL3 family. As to quaternary structure, part of the 50S ribosomal subunit. Forms a cluster with proteins L14 and L19. Methylated by PrmB.

Its function is as follows. One of the primary rRNA binding proteins, it binds directly near the 3'-end of the 23S rRNA, where it nucleates assembly of the 50S subunit. This is Large ribosomal subunit protein uL3 from Hydrogenovibrio crunogenus (strain DSM 25203 / XCL-2) (Thiomicrospira crunogena).